The sequence spans 77 residues: Putative defensin-like protein 185 (77 aa).

Residues 1–22 (MKNSSILLLLVVFFVISSSGEA) form the signal peptide. Intrachain disulfides connect Cys25/Cys77, Cys31/Cys54, Cys40/Cys71, and Cys44/Cys73.

This sequence belongs to the DEFL family.

The protein resides in the secreted. The chain is Putative defensin-like protein 185 (LCR39) from Arabidopsis thaliana (Mouse-ear cress).